Consider the following 401-residue polypeptide: Inositol phosphorylceramide synthase catalytic subunit AUR1 (401 aa).

The Cytoplasmic portion of the chain corresponds to methionine 1 to alanine 41. The helical transmembrane segment at leucine 42–asparagine 62 threads the bilayer. Residues proline 63–alanine 64 lie on the Lumenal side of the membrane. Residues proline 65–threonine 85 form a helical membrane-spanning segment. Topologically, residues serine 86 to glutamine 87 are cytoplasmic. A helical transmembrane segment spans residues phenylalanine 88–phenylalanine 108. Residues proline 109–leucine 155 are Lumenal-facing. The N-linked (GlcNAc...) asparagine glycan is linked to asparagine 132. A helical membrane pass occupies residues phenylalanine 156–valine 176. Residues leucine 177–glutamine 178 lie on the Cytoplasmic side of the membrane. Residues glycine 179–proline 199 traverse the membrane as a helical segment. The Lumenal portion of the chain corresponds to alanine 200 to serine 245. A helical transmembrane segment spans residues valine 246–phenylalanine 266. The Cytoplasmic segment spans residues cysteine 267–tyrosine 268. The helical transmembrane segment at cysteine 269–methionine 289 threads the bilayer. Residues tyrosine 290–leucine 291 are Lumenal-facing. Residues threonine 292–tyrosine 312 form a helical membrane-spanning segment. The Cytoplasmic portion of the chain corresponds to threonine 313–alanine 401. The interval valine 374–alanine 401 is disordered. The segment covering serine 382–serine 395 has biased composition (low complexity). Serine 392 and serine 395 each carry phosphoserine.

Belongs to the AUR1 family. Component of the inositol phosphorylceramide synthase complex composed of at least AUR1 and KEI1.

It is found in the golgi apparatus. Its subcellular location is the golgi stack membrane. The catalysed reaction is an N-(2R-hydroxy-very-long-chain fatty acyl)-(R)-4-hydroxysphingoid base + a 1,2-diacyl-sn-glycero-3-phospho-(1D-myo-inositol) = a 1D-myo-inositol-1-phospho-N-[(R)-2-hydroxy-very-long-chain fatty acyl]-(R)-4-hydroxysphingoid base + a 1,2-diacyl-sn-glycerol. Its activity is regulated as follows. Inhibited by aureobasidin A (AbA), khafrefungin and rustmicin. Its function is as follows. Catalytic component of the inositol phosphorylceramide synthase which catalyzes the addition of a phosphorylinositol group onto ceramide to form inositol phosphorylceramide, an essential step in sphingolipid biosynthesis. The polypeptide is Inositol phosphorylceramide synthase catalytic subunit AUR1 (Saccharomyces cerevisiae (strain ATCC 204508 / S288c) (Baker's yeast)).